Consider the following 415-residue polypeptide: S-inosyl-L-homocysteine hydrolase (415 aa).

Substrate-binding residues include Asp-123 and Glu-148. 149–151 serves as a coordination point for NAD(+); the sequence is TTT. Substrate-binding residues include Lys-178 and Asp-182. NAD(+) contacts are provided by residues Asn-183, 212–217, Glu-235, 291–293, and Asn-337; these read GYGWCG and AGH.

It belongs to the adenosylhomocysteinase family. The cofactor is NAD(+).

It is found in the cytoplasm. It carries out the reaction S-inosyl-L-homocysteine + H2O = L-homocysteine + inosine. The protein operates within amino-acid biosynthesis; S-adenosyl-L-methionine biosynthesis. Catalyzes the hydrolysis of S-inosyl-L-homocysteine (SIH) to L-homocysteine (Hcy) and inosine. Likely functions in a S-adenosyl-L-methionine (SAM) recycling pathway from S-adenosyl-L-homocysteine (SAH) produced from SAM-dependent methylation reactions. Can also catalyze the reverse reaction in vitro, i.e. the synthesis of SIH from Hcy and inosine. The protein is S-inosyl-L-homocysteine hydrolase of Methanococcus maripaludis (strain DSM 14266 / JCM 13030 / NBRC 101832 / S2 / LL).